The primary structure comprises 93 residues: DNA-binding protein HU 1 (93 aa).

This sequence belongs to the bacterial histone-like protein family. As to quaternary structure, homodimer.

The protein resides in the cytoplasm. It is found in the nucleoid. Its function is as follows. Histone-like DNA-binding protein which is capable of wrapping DNA to stabilize it, and thus to prevent its denaturation under extreme environmental conditions. In Streptomyces coelicolor (strain ATCC BAA-471 / A3(2) / M145), this protein is DNA-binding protein HU 1 (hup1).